The following is a 464-amino-acid chain: UDP-glycosyltransferase 76F2 (464 aa).

Residues serine 279, 338-340 (VNQ), 355-363 (HCGWNSTIE), and 377-380 (FSDQ) contribute to the UDP-alpha-D-glucose site.

It belongs to the UDP-glycosyltransferase family.

The sequence is that of UDP-glycosyltransferase 76F2 (UGT76F2) from Arabidopsis thaliana (Mouse-ear cress).